Consider the following 304-residue polypeptide: Dihydroorotate dehydrogenase B (NAD(+)), catalytic subunit (304 aa).

FMN-binding positions include S21 and 45–46 (KA). Substrate is bound by residues K45 and 69 to 73 (NAIGL). Residues N99 and N127 each coordinate FMN. N127 contacts substrate. C130 serves as the catalytic Nucleophile. K165 and I191 together coordinate FMN. Position 192 to 193 (192 to 193 (NT)) interacts with substrate. Residues G217, 243 to 244 (GG), and 265 to 266 (GT) contribute to the FMN site.

The protein belongs to the dihydroorotate dehydrogenase family. Type 1 subfamily. In terms of assembly, heterotetramer of 2 PyrK and 2 PyrD type B subunits. It depends on FMN as a cofactor.

The protein resides in the cytoplasm. It catalyses the reaction (S)-dihydroorotate + NAD(+) = orotate + NADH + H(+). The protein operates within pyrimidine metabolism; UMP biosynthesis via de novo pathway; orotate from (S)-dihydroorotate (NAD(+) route): step 1/1. Its function is as follows. Catalyzes the conversion of dihydroorotate to orotate with NAD(+) as electron acceptor. The chain is Dihydroorotate dehydrogenase B (NAD(+)), catalytic subunit (pyrD) from Listeria welshimeri serovar 6b (strain ATCC 35897 / DSM 20650 / CCUG 15529 / CIP 8149 / NCTC 11857 / SLCC 5334 / V8).